The chain runs to 464 residues: Protein FAM90A14 (464 aa).

Disordered stretches follow at residues 1–42, 70–389, and 411–437; these read MMAR…DPRL, PATL…HDGA, and APSF…SEAP. 2 stretches are compositionally biased toward basic and acidic residues: residues 74-89 and 97-114; these read GKKE…KPRV and NKDK…DPQR. The segment covering 180–197 has biased composition (low complexity); the sequence is LASLSPLRKASLSSSSSL.

It belongs to the FAM90 family.

In Homo sapiens (Human), this protein is Protein FAM90A14.